The sequence spans 377 residues: tRNA-specific 2-thiouridylase MnmA (377 aa).

ATP contacts are provided by residues 18 to 25 and Met44; that span reads GMSGGVDS. Residues 104–106 form an interaction with target base in tRNA region; the sequence is NPD. Cys109 serves as the catalytic Nucleophile. Cys109 and Cys209 are joined by a disulfide. An ATP-binding site is contributed by Gly134. Residues 159–161 form an interaction with tRNA region; that stretch reads KDQ. Cys209 serves as the catalytic Cysteine persulfide intermediate. The tract at residues 324–325 is interaction with tRNA; sequence RY.

Belongs to the MnmA/TRMU family.

The protein resides in the cytoplasm. It catalyses the reaction S-sulfanyl-L-cysteinyl-[protein] + uridine(34) in tRNA + AH2 + ATP = 2-thiouridine(34) in tRNA + L-cysteinyl-[protein] + A + AMP + diphosphate + H(+). Catalyzes the 2-thiolation of uridine at the wobble position (U34) of tRNA, leading to the formation of s(2)U34. In Photobacterium profundum (strain SS9), this protein is tRNA-specific 2-thiouridylase MnmA.